Reading from the N-terminus, the 360-residue chain is tRNA/tmRNA (uracil-C(5))-methyltransferase (360 aa).

Residues Gln-185, Tyr-213, Asn-218, Glu-234, and Asp-294 each coordinate S-adenosyl-L-methionine. The active-site Nucleophile is Cys-319. Catalysis depends on Glu-353, which acts as the Proton acceptor.

This sequence belongs to the class I-like SAM-binding methyltransferase superfamily. RNA M5U methyltransferase family. TrmA subfamily.

The catalysed reaction is uridine(54) in tRNA + S-adenosyl-L-methionine = 5-methyluridine(54) in tRNA + S-adenosyl-L-homocysteine + H(+). The enzyme catalyses uridine(341) in tmRNA + S-adenosyl-L-methionine = 5-methyluridine(341) in tmRNA + S-adenosyl-L-homocysteine + H(+). Functionally, dual-specificity methyltransferase that catalyzes the formation of 5-methyluridine at position 54 (m5U54) in all tRNAs, and that of position 341 (m5U341) in tmRNA (transfer-mRNA). The chain is tRNA/tmRNA (uracil-C(5))-methyltransferase from Nitratiruptor sp. (strain SB155-2).